The following is a 187-amino-acid chain: Large ribosomal subunit protein uL5 (187 aa).

Belongs to the universal ribosomal protein uL5 family. As to quaternary structure, part of the 50S ribosomal subunit; part of the 5S rRNA/L5/L18/L25 subcomplex. Contacts the 5S rRNA and the P site tRNA. Forms a bridge to the 30S subunit in the 70S ribosome.

In terms of biological role, this is one of the proteins that bind and probably mediate the attachment of the 5S RNA into the large ribosomal subunit, where it forms part of the central protuberance. In the 70S ribosome it contacts protein S13 of the 30S subunit (bridge B1b), connecting the 2 subunits; this bridge is implicated in subunit movement. Contacts the P site tRNA; the 5S rRNA and some of its associated proteins might help stabilize positioning of ribosome-bound tRNAs. In Dinoroseobacter shibae (strain DSM 16493 / NCIMB 14021 / DFL 12), this protein is Large ribosomal subunit protein uL5.